Here is a 388-residue protein sequence, read N- to C-terminus: Succinate--CoA ligase [ADP-forming] subunit beta (388 aa).

Residues 9–244 (KALFAEYGLP…PSQDDAREAH (236 aa)) enclose the ATP-grasp domain. Residues lysine 46, 53 to 55 (GRG), glutamate 99, threonine 102, and glutamate 107 contribute to the ATP site. Positions 199 and 213 each coordinate Mg(2+). Substrate contacts are provided by residues asparagine 264 and 321 to 323 (GIV).

The protein belongs to the succinate/malate CoA ligase beta subunit family. As to quaternary structure, heterotetramer of two alpha and two beta subunits. The cofactor is Mg(2+).

The enzyme catalyses succinate + ATP + CoA = succinyl-CoA + ADP + phosphate. The catalysed reaction is GTP + succinate + CoA = succinyl-CoA + GDP + phosphate. The protein operates within carbohydrate metabolism; tricarboxylic acid cycle; succinate from succinyl-CoA (ligase route): step 1/1. In terms of biological role, succinyl-CoA synthetase functions in the citric acid cycle (TCA), coupling the hydrolysis of succinyl-CoA to the synthesis of either ATP or GTP and thus represents the only step of substrate-level phosphorylation in the TCA. The beta subunit provides nucleotide specificity of the enzyme and binds the substrate succinate, while the binding sites for coenzyme A and phosphate are found in the alpha subunit. This chain is Succinate--CoA ligase [ADP-forming] subunit beta, found in Shewanella halifaxensis (strain HAW-EB4).